Consider the following 502-residue polypeptide: Probable glycine dehydrogenase (decarboxylating) subunit 2 (502 aa).

The residue at position 273 (lysine 273) is an N6-(pyridoxal phosphate)lysine.

This sequence belongs to the GcvP family. C-terminal subunit subfamily. The glycine cleavage system is composed of four proteins: P, T, L and H. In this organism, the P 'protein' is a heterodimer of two subunits. Pyridoxal 5'-phosphate serves as cofactor.

The catalysed reaction is N(6)-[(R)-lipoyl]-L-lysyl-[glycine-cleavage complex H protein] + glycine + H(+) = N(6)-[(R)-S(8)-aminomethyldihydrolipoyl]-L-lysyl-[glycine-cleavage complex H protein] + CO2. Its function is as follows. The glycine cleavage system catalyzes the degradation of glycine. The P protein binds the alpha-amino group of glycine through its pyridoxal phosphate cofactor; CO(2) is released and the remaining methylamine moiety is then transferred to the lipoamide cofactor of the H protein. This chain is Probable glycine dehydrogenase (decarboxylating) subunit 2, found in Pyrococcus horikoshii (strain ATCC 700860 / DSM 12428 / JCM 9974 / NBRC 100139 / OT-3).